Reading from the N-terminus, the 142-residue chain is Galactose-6-phosphate isomerase subunit LacA (142 aa).

Belongs to the LacAB/RpiB family. Heteromultimeric protein consisting of LacA and LacB.

It catalyses the reaction aldehydo-D-galactose 6-phosphate = keto-D-tagatose 6-phosphate. It functions in the pathway carbohydrate metabolism; D-galactose 6-phosphate degradation; D-tagatose 6-phosphate from D-galactose 6-phosphate: step 1/1. The sequence is that of Galactose-6-phosphate isomerase subunit LacA from Staphylococcus aureus.